A 158-amino-acid polypeptide reads, in one-letter code: Putative ribosomal RNA large subunit methyltransferase H (158 aa).

S-adenosyl-L-methionine is bound by residues Leu76, Gly107, and 126–131 (LSRMTF).

It belongs to the RNA methyltransferase RlmH family.

It localises to the cytoplasm. It catalyses the reaction pseudouridine(1915) in 23S rRNA + S-adenosyl-L-methionine = N(3)-methylpseudouridine(1915) in 23S rRNA + S-adenosyl-L-homocysteine + H(+). Specifically methylates the pseudouridine at position 1915 (m3Psi1915) in 23S rRNA. This is Putative ribosomal RNA large subunit methyltransferase H from Methanocorpusculum labreanum (strain ATCC 43576 / DSM 4855 / Z).